The primary structure comprises 63 residues: Large ribosomal subunit protein bL28 (63 aa).

Belongs to the bacterial ribosomal protein bL28 family.

The chain is Large ribosomal subunit protein bL28 from Geotalea daltonii (strain DSM 22248 / JCM 15807 / FRC-32) (Geobacter daltonii).